We begin with the raw amino-acid sequence, 291 residues long: MMRKSVRRAMLMTTACVSLLLASVPLCAQANDVQQKLAALEKSSGGRLGVALINTADNTQTLYRADERFAMCSTSKVMAVAAVLKQSETQKGLLSQRVEIKPSDLINYNPIAEKHVNGTMTFGELSAAALQYSDNTAMNKLIAHLGGPDKVTAFARTIGDDTFRLDRTEPTLNTAIPGDPRDTTTPLAMAQALRNLTLGNALGDTQRAQLVMWLKGNTTGAASIQAGLPTSWVVGDKTGSGGYGTTNDIAVIWPEGRAPLVLVTYFTQSEPKAESRRDVLAAAARIVTDGY.

Residues 1-30 form the signal peptide; sequence MMRKSVRRAMLMTTACVSLLLASVPLCAQA. The active-site Nucleophile; acyl-ester intermediate is serine 73. A beta-lactam contacts are provided by lysine 76, serine 133, glutamate 169, and serine 240.

This sequence belongs to the class-A beta-lactamase family. As to quaternary structure, monomer.

It is found in the secreted. It carries out the reaction a beta-lactam + H2O = a substituted beta-amino acid. Its activity is regulated as follows. Inhibited by the beta-lactamase-blocking agents clavulanic acid and tazobactam; in the DH10B strain. Functionally, extended-spectrum beta-lactamase (ESBL) which confers resistance to penicillins, as well as first, second and third-generation cephalosporins. Has cefotaxime-hydrolyzing activity. Inactive against cephalosporin antibiotic, cefoxitin, and the carbapenem, imipenem. The protein is Beta-lactamase CTX-M-25 of Escherichia coli.